The sequence spans 81 residues: Three-finger toxin 3FTx-Oxy6 (81 aa).

An N-terminal signal peptide occupies residues 1–21 (MKTLLLSLVVMTIVYLDLGYT). 4 disulfide bridges follow: cysteine 24–cysteine 43, cysteine 36–cysteine 61, cysteine 65–cysteine 73, and cysteine 74–cysteine 79.

This sequence belongs to the three-finger toxin family. Short-chain subfamily. Expressed by the venom gland.

The protein resides in the secreted. In Oxyuranus microlepidotus (Inland taipan), this protein is Three-finger toxin 3FTx-Oxy6.